The primary structure comprises 194 residues: MLSSTLRVAVVCVSNVNRSMEAHSILRRKGLSVRSFGTESHVRLPGPRPNRPVVYDFATTYKEMYNDLLRKDRERYTRNGILHILGRNERIKPGPERFQECTDFFDVIFTCEESVYDTVVEDLCSREQQTFQPVHVINMEIQDTLEDATLGAFLICEICQCLQQSDDMEDNLEELLLQMEEKAGKSFLHTVCFY.

The protein belongs to the SSU72 phosphatase family.

It is found in the nucleus. The catalysed reaction is O-phospho-L-seryl-[protein] + H2O = L-seryl-[protein] + phosphate. The enzyme catalyses O-phospho-L-threonyl-[protein] + H2O = L-threonyl-[protein] + phosphate. In terms of biological role, protein phosphatase that catalyzes the dephosphorylation of the C-terminal domain of RNA polymerase II. Plays a role in RNA processing and termination. This chain is RNA polymerase II subunit A C-terminal domain phosphatase SSU72 like protein 1, found in Homo sapiens (Human).